The following is a 735-amino-acid chain: Protostadienol synthase A (735 aa).

Residues 129–170 (KNEMIRYLLNFVNEDGGWGLWINSPSTVFGTTMNYTMLRILG) form a PFTB 1 repeat. Aspartate 460 (proton donor) is an active-site residue. PFTB repeat units lie at residues 487 to 528 (LAEA…YDNV), 564 to 604 (MARC…ETVG), and 613 to 660 (CRNA…ALMG).

This sequence belongs to the terpene cyclase/mutase family.

It catalyses the reaction (S)-2,3-epoxysqualene = (17Z)-protosta-17(20),24-dien-3beta-ol. Functionally, protostadienol synthase which cyclizes (3S)-oxidosqualene to (17Z)-protosta-17(20),24-dien-3-beta-ol (protostadienol), the biosynthetic precursor of helvolic acid, a secondary metabolite which promotes virulence. This is Protostadienol synthase A (PDSA) from Arthroderma gypseum (strain ATCC MYA-4604 / CBS 118893) (Microsporum gypseum).